Reading from the N-terminus, the 205-residue chain is MNEQLHNRTMAFAGILQAIAQVQHLARHGESDTDELAASLNTILVTDPESAADVYQDKAALHKGYQLVLNQLGDSSQKDVEITRYLVGILALERKLTRSNSGLAMLAERINQVNRQLHHFAITDEQVIANLASIYSDIISNLGPKIQISGNPLCLQRPLVQHKIRALLLAAMRSAVLWRQLGGKRRHLVFARKAIIDTAKKSLTL.

It belongs to the HflD family.

The protein localises to the cytoplasm. The protein resides in the cell inner membrane. The polypeptide is High frequency lysogenization protein HflD homolog (Shewanella sp. (strain ANA-3)).